The following is a 536-amino-acid chain: Nucleosome assembly protein 1-like 3 (536 aa).

2 disordered regions span residues 1 to 104 (MAEA…DKLP) and 160 to 338 (PTEE…KEDP). Residues 35-75 (SNSSSSTTSCGSTGSSSSSSSSSSSSSSSSSGSSGSSSNGS) are compositionally biased toward low complexity. Residues 77–95 (LHQKKRVPGPSRRAQRRPS) are compositionally biased toward basic residues. Positions 160-184 (PTEEECEWNSEEEFSGDEEMQDDTP) are enriched in acidic residues. Basic and acidic residues-rich tracts occupy residues 199–220 (GKENTEVKEEVKDVPEEVPEAK) and 227–269 (PKET…KTDS). The span at 287–300 (TQANAEYTDQPTED) shows a compositional bias: polar residues. Residues 306–324 (PVREAQKRVPETRPEERVN) show a composition bias toward basic and acidic residues.

The protein belongs to the nucleosome assembly protein (NAP) family.

The protein localises to the nucleus. The sequence is that of Nucleosome assembly protein 1-like 3 (Nap1l3) from Rattus norvegicus (Rat).